The chain runs to 241 residues: Alpha/beta-tubulin-N-acetyltransferase 9 (241 aa).

An N-acetyltransferase domain is found at 34–181; that stretch reads EELRHLTASE…VTLRLAVSEP (148 aa).

Belongs to the acetyltransferase family. GNAT subfamily.

It catalyses the reaction N-terminal L-methionyl-[tubulin] + acetyl-CoA = N-terminal N(alpha)-acetyl-L-methionyl-[tubulin] + CoA + H(+). N-acetyltransferase that mediates the acetylation of the N-terminal residues of alpha- and beta-tubulin. The protein is Alpha/beta-tubulin-N-acetyltransferase 9 (Nat9) of Mus musculus (Mouse).